Reading from the N-terminus, the 393-residue chain is MDAATLTYDTLRFEYEDFPETKEPVWILGRKYSVFTEKEEILLDVTSRLWFTYRKNFPAIGGTGPTSDTGWGCMLRCGQMIFAQALVCRHLGRDWRWIKGKRQTDNYFSVLNAFIDKKDSYYSIHQIAQMGVGEGKSIGQWYGPNTVAQVLKKLATFDTWSSLAVHIAMDNTVVMEEIRRLCQSNFSCAGAAACPAVEADVLYNGYPEEAGVRDKLSLWKPLVLLIPLRLGLTEINEAYIETLKHCFMMPQSLGVIGGKPNSAHYFIGYVGEELIYLDPHTTQPAVEPSDSGCLPDESFHCQHPPCRMSIAELDPSIAVGFFCHTEEDFNDWCHQIKKLSLVRGALPMFELVERQPSHFSNPDVLNLTPDSSDADRLERFFDSEDEDFEILSL.

The active-site Nucleophile is Cys-73. Residues Asp-278 and His-280 contribute to the active site. The LIR signature appears at 388–391 (FEIL).

Belongs to the peptidase C54 family.

It is found in the cytoplasm. Its subcellular location is the cytosol. The protein localises to the cytoplasmic vesicle. The protein resides in the autophagosome. It localises to the endoplasmic reticulum. It is found in the mitochondrion. It catalyses the reaction [protein]-C-terminal L-amino acid-glycyl-phosphatidylethanolamide + H2O = [protein]-C-terminal L-amino acid-glycine + a 1,2-diacyl-sn-glycero-3-phosphoethanolamine. It carries out the reaction [protein]-C-terminal L-amino acid-glycyl-phosphatidylserine + H2O = [protein]-C-terminal L-amino acid-glycine + a 1,2-diacyl-sn-glycero-3-phospho-L-serine. Cysteine protease that plays a key role in autophagy by mediating both proteolytic activation and delipidation of ATG8 family proteins. Required for canonical autophagy (macroautophagy), non-canonical autophagy as well as for mitophagy. The protease activity is required for proteolytic activation of ATG8 family proteins: cleaves the C-terminal amino acid of ATG8 proteins to reveal a C-terminal glycine. Exposure of the glycine at the C-terminus is essential for ATG8 proteins conjugation to phosphatidylethanolamine (PE) and insertion to membranes, which is necessary for autophagy. Protease activity is also required to counteract formation of high-molecular weight conjugates of ATG8 proteins (ATG8ylation): acts as a deubiquitinating-like enzyme that removes ATG8 conjugated to other proteins, such as ATG3. In addition to the protease activity, also mediates delipidation of ATG8 family proteins. Catalyzes delipidation of PE-conjugated forms of ATG8 proteins during macroautophagy. Also involved in non-canonical autophagy, a parallel pathway involving conjugation of ATG8 proteins to single membranes at endolysosomal compartments, by catalyzing delipidation of ATG8 proteins conjugated to phosphatidylserine (PS). The chain is Cysteine protease ATG4B from Gallus gallus (Chicken).